The chain runs to 139 residues: Large ribosomal subunit protein mL54 (139 aa).

Residues 1-50 (MPFIESMAPLSRAITRGISQFSCYSNTLVLRSSRNSSSSLVKRSYVSSRV) constitute a mitochondrion transit peptide. Residues 35–50 (NSSSSLVKRSYVSSRV) are compositionally biased toward low complexity. Positions 35–74 (NSSSSLVKRSYVSSRVSPKKPQHNSDATSSAQKVANKTHT) are disordered. A compositionally biased stretch (polar residues) spans 58–74 (NSDATSSAQKVANKTHT).

This sequence belongs to the mitochondrion-specific ribosomal protein mL54 family. As to quaternary structure, component of the mitochondrial large ribosomal subunit (mt-LSU). Mature yeast 74S mitochondrial ribosomes consist of a small (37S) and a large (54S) subunit. The 37S small subunit contains a 15S ribosomal RNA (15S mt-rRNA) and at least 32 different proteins. The 54S large subunit contains a 21S rRNA (21S mt-rRNA) and at least 45 different proteins.

Its subcellular location is the mitochondrion. Its function is as follows. Component of the mitochondrial ribosome (mitoribosome), a dedicated translation machinery responsible for the synthesis of mitochondrial genome-encoded proteins, including at least some of the essential transmembrane subunits of the mitochondrial respiratory chain. The mitoribosomes are attached to the mitochondrial inner membrane and translation products are cotranslationally integrated into the membrane. mL54 may have a meiosis-specific role as it accumulates during the middle stage of sporulation. This is Large ribosomal subunit protein mL54 (mrpl37) from Schizosaccharomyces pombe (strain 972 / ATCC 24843) (Fission yeast).